Here is an 863-residue protein sequence, read N- to C-terminus: Autotaxin (863 aa).

The signal sequence occupies residues 1–27; the sequence is MARRSSFQSCQIISLFTFAVGVNICLG. A propeptide spans 28-35 (removed by furin); sequence FTAHRIKR. Asn54 carries an N-linked (GlcNAc...) asparagine glycan. 2 SMB domains span residues 55–98 and 99–143; these read ISGS…LKTA and RGWE…GESH. Disulfide bonds link Cys59/Cys76, Cys63/Cys94, Cys74/Cys87, Cys80/Cys86, Cys103/Cys120, Cys108/Cys138, Cys118/Cys131, Cys124/Cys130, Cys149/Cys195, and Cys157/Cys351. The Cell attachment site signature appears at 127-129; that stretch reads RGD. The tract at residues 145–502 is phosphodiesterase; that stretch reads VDDDCEEIKA…STFKYKTKVP (358 aa). 2 residues coordinate Zn(2+): Asp172 and Thr210. The active-site Nucleophile is Thr210. The 1-(9Z-octadecenoyl)-sn-glycero-3-phosphate site is built by Thr210, Asn231, and Asp312. Residues Thr210, Asn231, and Asp312 each contribute to the 1-hexadecanoyl-sn-glycero-3-phosphate site. 3 residues coordinate 1-tetradecanoyl-sn-glycerol 3-phosphate: Thr210, Asn231, and Asp312. Zn(2+)-binding residues include Asp312, His316, Asp359, and His360. Disulfide bonds link Cys367–Cys469, Cys414–Cys806, Cys567–Cys667, Cys569–Cys652, and Cys775–Cys785. Asn411 carries an N-linked (GlcNAc...) asparagine glycan. His475 lines the Zn(2+) pocket. Position 475 (His475) interacts with 1-(9Z-octadecenoyl)-sn-glycero-3-phosphate. His475 provides a ligand contact to 1-hexadecanoyl-sn-glycero-3-phosphate. His475 is a 1-tetradecanoyl-sn-glycerol 3-phosphate binding site. Residue Asn525 is glycosylated (N-linked (GlcNAc...) asparagine). Residues 598–863 form a nuclease-like domain region; that stretch reads LYGRPAVLYR…TYLHTYESEI (266 aa). 5 residues coordinate Ca(2+): Asp740, Asp742, Asp744, Leu746, and Asp748. Asn807 is a glycosylation site (N-linked (GlcNAc...) asparagine). The interval 830–851 is required for secretion; sequence IEHLTSLDFFRKTSRSYPEILT.

Belongs to the nucleotide pyrophosphatase/phosphodiesterase family. The cofactor is Zn(2+). Requires Ca(2+) as cofactor. Post-translationally, N-glycosylation, but not furin-cleavage, plays a critical role on secretion and on lysoPLD activity. In terms of processing, the interdomain disulfide bond between Cys-414 and Cys-806 is essential for catalytic activity. Detected in blood plasma (at protein level). Predominantly expressed in brain, placenta, ovary, and small intestine. Expressed in a number of carcinomas such as hepatocellular and prostate carcinoma, neuroblastoma and non-small-cell lung cancer. Expressed in body fluids such as plasma, cerebral spinal fluid (CSF), saliva, follicular and amniotic fluids. Not detected in leukocytes. Isoform 1 is more highly expressed in peripheral tissues than in the central nervous system (CNS). Adipocytes only express isoform 1. Isoform 3 is more highly expressed in the brain than in peripheral tissues.

The protein localises to the secreted. It carries out the reaction a 1-O-alkyl-sn-glycero-3-phosphoethanolamine + H2O = a 1-O-alkyl-sn-glycero-3-phosphate + ethanolamine + H(+). The enzyme catalyses a 1-acyl-sn-glycero-3-phosphoethanolamine + H2O = a 1-acyl-sn-glycero-3-phosphate + ethanolamine + H(+). The catalysed reaction is 1-(9Z-octadecenoyl)-sn-glycero-3-phosphoethanolamine + H2O = 1-(9Z-octadecenoyl)-sn-glycero-3-phosphate + ethanolamine + H(+). It catalyses the reaction a 1-O-alkyl-sn-glycero-3-phosphocholine + H2O = a 1-O-alkyl-sn-glycero-3-phosphate + choline + H(+). It carries out the reaction 1-O-(9Z-octadecenyl)-sn-glycero-3-phosphocholine + H2O = 1-O-(9Z-octadecenyl)-sn-glycero-3-phosphate + choline + H(+). The enzyme catalyses 1-O-hexadecyl-sn-glycero-3-phosphocholine + H2O = 1-O-hexadecyl-sn-glycero-3-phosphate + choline + H(+). The catalysed reaction is a 1-O-(1Z-alkenyl)-sn-glycero-3-phosphocholine + H2O = a 1-O-(1Z-alkenyl)-sn-glycero-3-phosphate + choline + H(+). It catalyses the reaction a 1-acyl-sn-glycero-3-phosphocholine + H2O = a 1-acyl-sn-glycero-3-phosphate + choline + H(+). It carries out the reaction 1-dodecanoyl-sn-glycero-3-phosphocholine + H2O = 1-dodecanoyl-sn-glycerol 3-phosphate + choline + H(+). The enzyme catalyses 1-(9Z-octadecenoyl)-sn-glycero-3-phosphocholine + H2O = 1-(9Z-octadecenoyl)-sn-glycero-3-phosphate + choline + H(+). The catalysed reaction is 1-tetradecanoyl-sn-glycero-3-phosphocholine + H2O = 1-tetradecanoyl-sn-glycerol 3-phosphate + choline + H(+). It catalyses the reaction 1-decanoyl-sn-glycero-3-phosphocholine + H2O = 1-decanoyl-sn-glycero-3-phosphate + choline + H(+). It carries out the reaction 1-octadecanoyl-sn-glycero-3-phosphocholine + H2O = 1-octadecanoyl-sn-glycero-3-phosphate + choline + H(+). The enzyme catalyses 1-hexadecanoyl-sn-glycero-3-phosphocholine + H2O = 1-hexadecanoyl-sn-glycero-3-phosphate + choline + H(+). The catalysed reaction is 1-hexanoyl-sn-glycero-3-phosphocholine + H2O = 1-hexanoyl-sn-glycero-3-phosphate + choline + H(+). It catalyses the reaction 1-(9Z,12Z)-octadecadienoyl-sn-glycero-3-phosphocholine + H2O = 1-(9Z,12Z)-octadecadienoyl-sn-glycero-3-phosphate + choline + H(+). It carries out the reaction sphing-4-enine-phosphocholine + H2O = sphing-4-enine 1-phosphate + choline + H(+). The enzyme catalyses 1-(5Z,8Z,11Z,14Z-eicosatetraenoyl)-sn-glycero-3-phosphocholine + H2O = 1-(5Z,8Z,11Z,14Z-eicosatetraenoyl)-sn-glycero-3-phosphate + choline + H(+). The catalysed reaction is a 2-acyl-sn-glycero-3-phosphocholine + H2O = a 2-acyl-sn-glycerol 3-phosphate + choline + H(+). It catalyses the reaction a 1,2-diacyl-sn-glycero-3-phosphocholine + H2O = a 1,2-diacyl-sn-glycero-3-phosphate + choline + H(+). It carries out the reaction 1,2-dioctanoyl-sn-glycero-3-phosphocholine + H2O = 1,2-dioctanoyl-sn-glycero-3-phosphate + choline + H(+). The enzyme catalyses 1,2-didecanoyl-sn-glycero-3-phosphocholine + H2O = 1,2-didecanoyl-sn-glycero-3-phosphate + choline + H(+). The catalysed reaction is a 1-acyl-sn-glycero-3-phospho-L-serine + H2O = a 1-acyl-sn-glycero-3-phosphate + L-serine + H(+). It catalyses the reaction 1-(9Z-octadecenoyl)-sn-glycero-3-phospho-L-serine + H2O = 1-(9Z-octadecenoyl)-sn-glycero-3-phosphate + L-serine + H(+). It carries out the reaction a 2-acyl-sn-glycero-3-phospho-L-serine + H2O = a 2-acyl-sn-glycerol 3-phosphate + L-serine + H(+). Its activity is regulated as follows. Inhibited by lysophosphatidic acid (LPA) and sphingosine-1-phosphate (S1P). Inhibited by EDTA and EGTA. Its function is as follows. Secreted lysophospholipase D that hydrolyzes lysophospholipids to produce the signaling molecule lysophosphatidic acid (LPA) in extracellular fluids. Its major substrate is lysophosphatidylcholine. Can also act on sphingosylphosphorylcholine producing sphingosine-1-phosphate, a modulator of cell motility. Can hydrolyze, in vitro, bis-pNPP, to some extent pNP-TMP, and barely ATP. Involved in several motility-related processes such as angiogenesis and neurite outgrowth. Acts as an angiogenic factor by stimulating migration of smooth muscle cells and microtubule formation. Stimulates migration of melanoma cells, probably via a pertussis toxin-sensitive G protein. May have a role in induction of parturition. Possible involvement in cell proliferation and adipose tissue development. Required for LPA production in activated platelets, cleaves the sn-1 lysophospholipids to generate sn-1 lysophosphatidic acids containing predominantly 18:2 and 20:4 fatty acids. Shows a preference for the sn-1 to the sn-2 isomer of 1-O-alkyl-sn-glycero-3-phosphocholine (lyso-PAF). This chain is Autotaxin, found in Homo sapiens (Human).